The following is a 602-amino-acid chain: RecBCD enzyme subunit RecD (602 aa).

Glycine 174–threonine 181 contacts ATP.

This sequence belongs to the RecD family. As to quaternary structure, heterotrimer of RecB, RecC and RecD. All subunits contribute to DNA-binding.

It catalyses the reaction Couples ATP hydrolysis with the unwinding of duplex DNA at the replication fork by translocating in the 5'-3' direction. This creates two antiparallel DNA single strands (ssDNA). The leading ssDNA polymer is the template for DNA polymerase III holoenzyme which synthesizes a continuous strand.. It carries out the reaction ATP + H2O = ADP + phosphate + H(+). Its function is as follows. A helicase/nuclease that prepares dsDNA breaks (DSB) for recombinational DNA repair. Binds to DSBs and unwinds DNA via a highly rapid and processive ATP-dependent bidirectional helicase activity. Unwinds dsDNA until it encounters a Chi (crossover hotspot instigator) sequence from the 3' direction. Cuts ssDNA a few nucleotides 3' to the Chi site. The properties and activities of the enzyme are changed at Chi. The Chi-altered holoenzyme produces a long 3'-ssDNA overhang and facilitates RecA-binding to the ssDNA for homologous DNA recombination and repair. Holoenzyme degrades any linearized DNA that is unable to undergo homologous recombination. In the holoenzyme this subunit has ssDNA-dependent ATPase and 5'-3' helicase activity. When added to pre-assembled RecBC greatly stimulates nuclease activity and augments holoenzyme processivity. Negatively regulates the RecA-loading ability of RecBCD. This chain is RecBCD enzyme subunit RecD, found in Buchnera aphidicola subsp. Schizaphis graminum (strain Sg).